The following is a 425-amino-acid chain: 2-oxoglutarate and iron-dependent oxygenase JMJD4 homolog (425 aa).

Residues 165 to 316 (AAQMPGYNFY…MVWQNLKNNL (152 aa)) enclose the JmjC domain. Fe cation contacts are provided by histidine 212, aspartate 214, and histidine 284.

This sequence belongs to the JMJD6 family. Fe(2+) serves as cofactor.

The protein localises to the nucleus. The protein resides in the cytoplasm. It carries out the reaction L-lysyl-[protein] + 2-oxoglutarate + O2 = 4-hydroxy-L-lysyl-[protein] + succinate + CO2. Its function is as follows. Catalyzes the 2-oxoglutarate and iron-dependent C4-lysyl hydroxylation of eRF1 thereby promoting the translational termination efficiency of eRF1. May be involved in regulation of chromatin structure, promoting expansion of heterochromatin. This is 2-oxoglutarate and iron-dependent oxygenase JMJD4 homolog from Drosophila melanogaster (Fruit fly).